We begin with the raw amino-acid sequence, 154 residues long: 2S sulfur-rich seed storage protein 2 (154 aa).

An N-terminal signal peptide occupies residues 1–22 (MAKMSVVAAALLALLVLGQATA). A disordered region spans residues 29–52 (TTLEEEQEENPRGRSEQQCREQME). A compositionally biased stretch (basic and acidic residues) spans 37–52 (ENPRGRSEQQCREQME). 4 cysteine pairs are disulfide-bonded: C47/C101, C60/C90, C91/C138, and C103/C145. A propeptide spanning residues 72-76 (PYQNP) is cleaved from the precursor. The propeptide occupies 151–154 (TAWL).

It belongs to the 2S seed storage albumins family. In terms of assembly, the mature protein consists of a small and a large chain linked by disulfide bonds.

In terms of biological role, this is a 2S seed storage protein. This chain is 2S sulfur-rich seed storage protein 2 (BE2S2), found in Bertholletia excelsa (Brazil nut).